A 156-amino-acid polypeptide reads, in one-letter code: Isotocin-neurophysin IT 2 (156 aa).

Positions 1-19 are cleaved as a signal peptide; it reads MTGAAVSVCLLYALSVCSA. A disulfide bridge connects residues C20 and C25. Position 28 is a glycine amide (G28). 7 cysteine pairs are disulfide-bonded: C41-C85, C44-C58, C52-C75, C59-C65, C92-C105, C99-C117, and C106-C111.

This sequence belongs to the vasopressin/oxytocin family. Post-translationally, seven disulfide bonds are present in neurophysin.

The protein resides in the secreted. Isotocin causes contraction of smooth muscles. This chain is Isotocin-neurophysin IT 2, found in Oncorhynchus keta (Chum salmon).